A 766-amino-acid chain; its full sequence is Leucine-rich repeat and fibronectin type III domain-containing protein 1 (766 aa).

Positions 1-31 (MAPGPFSSGLFSPPPAALPFLLLLWAGASRG) are cleaved as a signal peptide. The LRRNT domain occupies 32-65 (QPCPGRCICQNVAPTLTMLCAKTGLLFVPPAIDR). Residues 32–536 (QPCPGRCICQ…LRAHFLGGTM (505 aa)) lie on the Extracellular side of the membrane. 7 LRR repeats span residues 66–87 (RVVE…DFAN), 90–111 (SLVH…AFAD), 114–135 (ALRA…QLRG), 138–159 (NLRH…AFDA), 163–184 (TVED…AVGQ), 187–208 (NLNT…TFVQ), and 211–232 (KLVR…GLFL). Residue N87 is glycosylated (N-linked (GlcNAc...) asparagine). Residues 252–298 (NPLHCNCELLWLRRLTREDDLETCATPEHLTDRYFWSIPEEEFLCEP) form the LRRCT domain. The Ig-like domain maps to 299 to 386 (PLITRQAGGR…GEATAPVEVC (88 aa)). C321 and C370 are oxidised to a cystine. A glycan (N-linked (GlcNAc...) asparagine) is linked at N343. The segment at 397-424 (PAAPPPLTEPGSSDIATPGRPGANDSTS) is disordered. The 97-residue stretch at 424 to 520 (SERRLVAAEL…GCVQFTTAGD (97 aa)) folds into the Fibronectin type-III domain. The helical transmembrane segment at 537–557 (IIAIGGVIVASVLVFIVLLMI) threads the bilayer. Residues 558 to 766 (RYKVYGDGDS…STEWMLESTV (209 aa)) lie on the Cytoplasmic side of the membrane. Disordered regions lie at residues 568–601 (RRIK…PPAP) and 645–742 (LCLL…GEDG). Position 713 is a phosphoserine (S713). Residues 714–727 (YPRRARRTKRHRST) are compositionally biased toward basic residues. The PDZ-binding motif lies at 763 to 766 (ESTV).

It belongs to the LRFN family. As to quaternary structure, can form heteromeric complexes with LRFN2, LRFN3, LRFN4 and LRFN5. Forms homomeric complexes, but not across cell junctions. Interacts with DLG4. Also interacts with DLG1, DLG2, and DLG3. Interacts with 2 AMPA receptor subunits GRIA1 and GRIA2 and NMDA receptor subunit GRIN1. Post-translationally, glycosylated. Predominantly expressed in the brain, with a weak, but broad expression in the cerebral cortex and diencephalic nuclei. Also detected in other parts of the central nervous system, including the olfactory bulb, pons, cerebellum, and medulla oblongata, as well as in the peripheral nervous system, such as the ganglia of cranial nerves and the dorsal root ganglion during gestation.

It is found in the membrane. Its subcellular location is the synapse. The protein resides in the postsynaptic density membrane. Its function is as follows. Promotes neurite outgrowth in hippocampal neurons. Involved in the regulation and maintenance of excitatory synapses. Induces the clustering of excitatory postsynaptic proteins, including DLG4, DLGAP1, GRIA1 and GRIN1. This Mus musculus (Mouse) protein is Leucine-rich repeat and fibronectin type III domain-containing protein 1 (Lrfn1).